Reading from the N-terminus, the 298-residue chain is ATP phosphoribosyltransferase (298 aa).

Belongs to the ATP phosphoribosyltransferase family. Long subfamily. Requires Mg(2+) as cofactor.

Its subcellular location is the cytoplasm. It carries out the reaction 1-(5-phospho-beta-D-ribosyl)-ATP + diphosphate = 5-phospho-alpha-D-ribose 1-diphosphate + ATP. It functions in the pathway amino-acid biosynthesis; L-histidine biosynthesis; L-histidine from 5-phospho-alpha-D-ribose 1-diphosphate: step 1/9. With respect to regulation, feedback inhibited by histidine. Functionally, catalyzes the condensation of ATP and 5-phosphoribose 1-diphosphate to form N'-(5'-phosphoribosyl)-ATP (PR-ATP). Has a crucial role in the pathway because the rate of histidine biosynthesis seems to be controlled primarily by regulation of HisG enzymatic activity. The polypeptide is ATP phosphoribosyltransferase (Vibrio campbellii (strain ATCC BAA-1116)).